The primary structure comprises 104 residues: Gastrin (104 aa).

A signal peptide spans 1–21 (MQRLCVCVLILALALTAFSEA). The interval 22-49 (SWKPRSQLQDAPSGPGANGGLEPHWLNR) is disordered. A propeptide spanning residues 22-58 (SWKPRSQLQDAPSGPGANGGLEPHWLNRLGPASHHRW) is cleaved from the precursor. A pyrrolidone carboxylic acid mark is found at Q59 and Q76. The residue at position 87 (Y87) is a Sulfotyrosine. Phenylalanine amide is present on F92. S96 is modified (phosphoserine). A propeptide spanning residues 96-104 (SAEDGDQHP) is cleaved from the precursor.

This sequence belongs to the gastrin/cholecystokinin family.

The protein localises to the secreted. Its function is as follows. Gastrin stimulates the stomach mucosa to produce and secrete hydrochloric acid and the pancreas to secrete its digestive enzymes. It also stimulates smooth muscle contraction and increases blood circulation and water secretion in the stomach and intestine. This chain is Gastrin (GAST), found in Felis catus (Cat).